A 226-amino-acid chain; its full sequence is 2,3-bisphosphoglycerate-dependent phosphoglycerate mutase (226 aa).

Residues 8–15, 21–22, Arg58, 109–112, Lys120, 136–137, and 180–181 each bind substrate; these read RHGQSVWN, TG, ERMY, RR, and GN. Catalysis depends on His9, which acts as the Tele-phosphohistidine intermediate. The active-site Proton donor/acceptor is the Glu109.

The protein belongs to the phosphoglycerate mutase family. BPG-dependent PGAM subfamily.

It carries out the reaction (2R)-2-phosphoglycerate = (2R)-3-phosphoglycerate. The protein operates within carbohydrate degradation; glycolysis; pyruvate from D-glyceraldehyde 3-phosphate: step 3/5. Catalyzes the interconversion of 2-phosphoglycerate and 3-phosphoglycerate. This is 2,3-bisphosphoglycerate-dependent phosphoglycerate mutase from Chlamydia trachomatis serovar L2 (strain ATCC VR-902B / DSM 19102 / 434/Bu).